A 39-amino-acid polypeptide reads, in one-letter code: Ribonuclease UK114 (39 aa).

Belongs to the RutC family. Monomer. In terms of processing, the N-terminus may be blocked. In terms of tissue distribution, mainly expressed in the liver and kidney. Lower expression found in intestine, gizzard, glandular stomach, heart, brain and spleen.

The protein localises to the cytoplasm. In terms of biological role, endoribonuclease responsible for the inhibition of the translation by cleaving mRNA. Inhibits cell-free protein synthesis. Cleaves phosphodiester bonds only in single-stranded RNA. This is Ribonuclease UK114 from Gallus gallus (Chicken).